The primary structure comprises 318 residues: Protoheme IX farnesyltransferase (318 aa).

Transmembrane regions (helical) follow at residues 37–57 (VMELLLVTTLPTMIFAARGLP), 59–79 (IWLILATMIGGAFAAGSAGAF), 108–128 (EALVFSWALGILSIAILWFGA), 131–151 (LAGLLGIAAIFFYVVVYTLIL), 158–178 (NIVWGGVAGCMPVLIAWAAVT), 183–203 (WPAIILFMVIFLWTPPHYWPL), 216–238 (VPMLGAVAGARIVSVQVVLYTWA), 249–269 (LGHACIVYTVVAGAAGLWFLL), and 296–316 (ISYLTLLFVALAVDPFVGMPL).

Belongs to the UbiA prenyltransferase family. Protoheme IX farnesyltransferase subfamily.

The protein resides in the cell membrane. It carries out the reaction heme b + (2E,6E)-farnesyl diphosphate + H2O = Fe(II)-heme o + diphosphate. The protein operates within porphyrin-containing compound metabolism; heme O biosynthesis; heme O from protoheme: step 1/1. Functionally, converts heme B (protoheme IX) to heme O by substitution of the vinyl group on carbon 2 of heme B porphyrin ring with a hydroxyethyl farnesyl side group. In Renibacterium salmoninarum (strain ATCC 33209 / DSM 20767 / JCM 11484 / NBRC 15589 / NCIMB 2235), this protein is Protoheme IX farnesyltransferase.